Here is a 66-residue protein sequence, read N- to C-terminus: MPKMKTHRASAKRFKRTANGGLKRHHAFTGHRFHGKTKKQRRHLRKAAMVSRSDIKRIKQMLAQMH.

The tract at residues 1–23 is disordered; sequence MPKMKTHRASAKRFKRTANGGLK.

This sequence belongs to the bacterial ribosomal protein bL35 family.

This Lactobacillus helveticus (strain DPC 4571) protein is Large ribosomal subunit protein bL35.